Reading from the N-terminus, the 373-residue chain is Probable G-protein coupled receptor 173 (373 aa).

At 1–26 the chain is on the extracellular side; it reads MANTTGEPEEVSGALSPPSASAYVKL. An N-linked (GlcNAc...) asparagine glycan is attached at asparagine 3. The helical transmembrane segment at 27–47 threads the bilayer; that stretch reads VLLGLIMCVSLAGNAILSLLV. Residues 48-59 lie on the Cytoplasmic side of the membrane; that stretch reads LKERALHKAPYY. A helical transmembrane segment spans residues 60 to 80; the sequence is FLLDLCLADGIRSAVCFPFVL. At 81-97 the chain is on the extracellular side; that stretch reads ASVRHGSSWTFSALSCK. Cysteine 96 and cysteine 174 form a disulfide bridge. A helical membrane pass occupies residues 98 to 118; sequence IVAFMAVLFCFHAAFMLFCIS. Over 119–139 the chain is Cytoplasmic; sequence VTRYMAIAHHRFYAKRMTLWT. The helical transmembrane segment at 140 to 160 threads the bilayer; it reads CAAVICMAWTLSVAMAFPPVF. At 161–188 the chain is on the extracellular side; the sequence is DVGTYKFIREEDQCIFEHRYFKANDTLG. Asparagine 184 is a glycosylation site (N-linked (GlcNAc...) asparagine). A helical membrane pass occupies residues 189-209; it reads FMLMLAVLMAATHAVYGKLLL. At 210 to 287 the chain is on the cytoplasmic side; that stretch reads FEYRHRKMKP…VKGEKQLGRM (78 aa). A helical membrane pass occupies residues 288–308; it reads FYAITLLFLLLWSPYIVACYW. Topologically, residues 309 to 322 are extracellular; it reads RVFVKACAVPHRYL. A helical transmembrane segment spans residues 323–343; the sequence is ATAVWMSFAQAAVNPIVCFLL. Over 344–373 the chain is Cytoplasmic; sequence NKDLKKCLRTHAPCWGTGGAPAPREPYCVM.

The protein belongs to the G-protein coupled receptor 1 family. In terms of tissue distribution, expressed in the ovary, specifically in granulosa cells of follicles that have passed the primary stage and in oocytes (at protein level). Expressed at high levels in brain. Lower levels in small intestine. In brain regions, detected in all regions tested. Highest levels in the cerebellum and cerebral cortex.

Its subcellular location is the cell membrane. In terms of biological role, is a receptor for the SMIM20 derived peptides Phoenixin-14 and Phoenixin-20. It mediates the Phoenixin-14 and Phoenixin-20 augmentation of gonadotropin-releasing hormone (GNRH) signaling in the hypothalamus and pituitary gland. In the ovary, it mediates the effects of Phoenixin-14 and Phoenixin-20 induced granulosa cell proliferation during follicular growth. In Homo sapiens (Human), this protein is Probable G-protein coupled receptor 173 (GPR173).